The primary structure comprises 472 residues: Ras-GEF domain-containing family member 1B (472 aa).

Residues 34-164 (HDNNLLSGSL…MIQCLIRKLA (131 aa)) form the N-terminal Ras-GEF domain. The region spanning 204–452 (DPYTLAQQLT…YLASYESEGP (249 aa)) is the Ras-GEF domain.

Interacts with CCDC124 during cytokinesis. Interacts with Ras family proteins.

The protein resides in the early endosome. Its subcellular location is the late endosome. It is found in the midbody. Its function is as follows. Guanine nucleotide exchange factor (GEF) with specificity for RAP2A, it doesn't seems to activate other Ras family proteins (in vitro). This Bos taurus (Bovine) protein is Ras-GEF domain-containing family member 1B (RASGEF1B).